We begin with the raw amino-acid sequence, 428 residues long: Hercynine oxygenase (428 aa).

His-46 serves as a coordination point for Fe cation. 82–85 provides a ligand contact to gamma-L-glutamyl-L-cysteine; the sequence is RASR. Fe cation is bound by residues His-129 and His-133. Residues Asp-411 and Arg-415 each contribute to the gamma-L-glutamyl-L-cysteine site.

It belongs to the EgtB family. In terms of assembly, monomer. Fe(2+) serves as cofactor.

The catalysed reaction is gamma-L-glutamyl-L-cysteine + hercynine + O2 = gamma-L-glutamyl-hercynylcysteine S-oxide + H2O. It functions in the pathway amino-acid biosynthesis; ergothioneine biosynthesis. Its function is as follows. Catalyzes the oxidative sulfurization of hercynine (N-alpha,N-alpha,N-alpha-trimethyl-L-histidine) into hercynyl-gamma-L-glutamyl-L-cysteine sulfoxide, a step in the biosynthesis pathway of ergothioneine. Cannot use the alternative thiols cysteine, N-acetylcysteine, or glutathione instead of gamma-glutamylcysteine as substrates, and histidine is a poor sulfur acceptor substrate compared to hercynine. The chain is Hercynine oxygenase from Mycolicibacterium smegmatis (strain ATCC 700084 / mc(2)155) (Mycobacterium smegmatis).